We begin with the raw amino-acid sequence, 27 residues long: Endoglucanase gh5 (27 aa).

The active-site Nucleophile is Glu-6.

It catalyses the reaction Endohydrolysis of (1-&gt;4)-beta-D-glucosidic linkages in cellulose, lichenin and cereal beta-D-glucans.. Its activity is regulated as follows. Activity is stimulated by zinc ions, potassium ions and DTT. Activity is inhibited by manganese and chloride ions. In terms of biological role, endoglucanase (EG) that cleaves the internal beta-1,4-glucosidic bonds in cellulose. In Fomes meliae (Fomitopsis meliae), this protein is Endoglucanase gh5.